The sequence spans 169 residues: Protein-export protein SecB (169 aa).

This sequence belongs to the SecB family. As to quaternary structure, homotetramer, a dimer of dimers. One homotetramer interacts with 1 SecA dimer.

It is found in the cytoplasm. One of the proteins required for the normal export of preproteins out of the cell cytoplasm. It is a molecular chaperone that binds to a subset of precursor proteins, maintaining them in a translocation-competent state. It also specifically binds to its receptor SecA. The protein is Protein-export protein SecB of Haemophilus influenzae (strain PittEE).